Reading from the N-terminus, the 151-residue chain is Ribosome maturation factor RimP (151 aa).

This sequence belongs to the RimP family.

The protein resides in the cytoplasm. Its function is as follows. Required for maturation of 30S ribosomal subunits. The protein is Ribosome maturation factor RimP of Shewanella sp. (strain MR-4).